Here is a 243-residue protein sequence, read N- to C-terminus: 35 kDa gas vesicle protein (243 aa).

It belongs to the gas vesicle GvpC family.

The protein localises to the gas vesicle shell. Functionally, may confer stability to the gas vesicle shells. Gas vesicles are small, hollow, gas filled protein structures that are found in several microbial planktonic microorganisms. They allow the positioning of the organism at the favorable depth for growth. The chain is 35 kDa gas vesicle protein from Dactylococcopsis salina (strain PCC 8305) (Myxobactron salinum).